The following is a 391-amino-acid chain: Calcium-binding and spermatid-specific protein 1 (391 aa).

Disordered regions lie at residues 1–23 (MAEDGSPKIYSRPPRDNSKTPTE), 90–110 (PEKEITTPTETPNSKPKGSIT), and 152–221 (KEVV…KEVT). Residues 90 to 101 (PEKEITTPTETP) are compositionally biased toward low complexity. A phosphoserine mark is found at Ser253 and Ser269. The disordered stretch occupies residues 271–299 (EKAKDNVEDPLNDEESTDGANDWMEKETA). A compositionally biased stretch (acidic residues) spans 278–287 (EDPLNDEEST). Phosphoserine is present on residues Ser314, Ser347, Ser357, Ser372, and Ser376. The segment at 330 to 351 (EESHVNTTDLPENETTESVTNV) is disordered.

As to expression, detected only in testis. Expressed from stages X to VIII of the seminiferous epithelial cycle. Expressed from step 13 to step 16 of spermatid development (at protein level).

It localises to the cytoplasm. The protein resides in the mitochondrion inner membrane. Its subcellular location is the cell projection. The protein localises to the cilium. It is found in the flagellum. It localises to the cytoplasmic vesicle. The protein resides in the secretory vesicle. Its subcellular location is the acrosome. Functionally, calcium-binding protein. Essential for maintaining the structural integrity of the sperm flagella. The sequence is that of Calcium-binding and spermatid-specific protein 1 (Cabs1) from Mus musculus (Mouse).